A 262-amino-acid polypeptide reads, in one-letter code: Tryptophan synthase alpha chain (262 aa).

Active-site proton acceptor residues include E49 and D60.

The protein belongs to the TrpA family. Tetramer of two alpha and two beta chains.

The catalysed reaction is (1S,2R)-1-C-(indol-3-yl)glycerol 3-phosphate + L-serine = D-glyceraldehyde 3-phosphate + L-tryptophan + H2O. The protein operates within amino-acid biosynthesis; L-tryptophan biosynthesis; L-tryptophan from chorismate: step 5/5. In terms of biological role, the alpha subunit is responsible for the aldol cleavage of indoleglycerol phosphate to indole and glyceraldehyde 3-phosphate. The sequence is that of Tryptophan synthase alpha chain from Aquifex aeolicus (strain VF5).